Consider the following 24-residue polypeptide: Caerulein precursor fragment B4 (24 aa).

In terms of tissue distribution, expressed by the skin glands.

The protein localises to the secreted. Functionally, has antibacterial and antifungal activity. In Xenopus borealis (Kenyan clawed frog), this protein is Caerulein precursor fragment B4.